The following is a 305-amino-acid chain: Methionyl-tRNA formyltransferase (305 aa).

111-114 (SLLP) is a binding site for (6S)-5,6,7,8-tetrahydrofolate.

This sequence belongs to the Fmt family.

It catalyses the reaction L-methionyl-tRNA(fMet) + (6R)-10-formyltetrahydrofolate = N-formyl-L-methionyl-tRNA(fMet) + (6S)-5,6,7,8-tetrahydrofolate + H(+). Attaches a formyl group to the free amino group of methionyl-tRNA(fMet). The formyl group appears to play a dual role in the initiator identity of N-formylmethionyl-tRNA by promoting its recognition by IF2 and preventing the misappropriation of this tRNA by the elongation apparatus. The polypeptide is Methionyl-tRNA formyltransferase (Helicobacter pylori (strain P12)).